A 154-amino-acid polypeptide reads, in one-letter code: Ascorbate-specific PTS system EIIA component (154 aa).

Residues 6-150 (SLAENNSIRL…QEVLDLIDRT (145 aa)) enclose the PTS EIIA type-2 domain. Residue H68 is the Tele-phosphohistidine intermediate of the active site. H68 bears the Phosphohistidine mark.

The protein resides in the cytoplasm. Its function is as follows. The phosphoenolpyruvate-dependent sugar phosphotransferase system (sugar PTS), a major carbohydrate active transport system, catalyzes the phosphorylation of incoming sugar substrates concomitantly with their translocation across the cell membrane. The enzyme II UlaABC PTS system is involved in ascorbate transport. In Salmonella choleraesuis (strain SC-B67), this protein is Ascorbate-specific PTS system EIIA component (ulaC).